The chain runs to 337 residues: Dehydrogenase FUB6 (337 aa).

It belongs to the zinc-containing alcohol dehydrogenase family. Quinone oxidoreductase subfamily.

It participates in mycotoxin biosynthesis. Functionally, dehydrogenase; part of the gene cluster that mediates the biosynthesis of fusaric acid, a mycotoxin with low to moderate toxicity to animals and humans, but with high phytotoxic properties. L-aspartate is suggested as fusaric acid amino acid precursor that is activated and further processed to O-acetyl-L-homoserine by cluster enzymes aspartate kinase FUB3 and homoserine O-acetyltransferase FUB5, as well as enzymes of the primary metabolism. The polyketide synthase (PKS) FUB1 generates the triketide trans-2-hexenal which is presumptively released by the hydrolase FUB4 and linked to the NRPS-bound amino acid precursor by NAD(P)-dependent dehydrogenase FUB6. FUB1, FUB4, and the non-canonical NRPS Fub8 may form an enzyme complex. Further processing of the NRPS-bound intermediate might be carried out by FUB6 and the O-acetylhomoserine FUB7, enabling a spontaneous electrocyclization to close the carbon backbone of fusaric acid. Dihydrofusaric acid is likely to be released via reduction by the thioester reductase (TR) domain of FUB8 whereupon the final oxidation to fusaric acid may (also) be performed by the FMN-dependent dehydrogenase FUB9. The sequence is that of Dehydrogenase FUB6 from Gibberella fujikuroi (strain CBS 195.34 / IMI 58289 / NRRL A-6831) (Bakanae and foot rot disease fungus).